The following is a 210-amino-acid chain: Large ribosomal subunit protein uL3 (210 aa).

Residues 125-151 are disordered; it reads RHGQSRGPMSHGSRYHRRPGSMGPVAP.

This sequence belongs to the universal ribosomal protein uL3 family. In terms of assembly, part of the 50S ribosomal subunit. Forms a cluster with proteins L14 and L19.

In terms of biological role, one of the primary rRNA binding proteins, it binds directly near the 3'-end of the 23S rRNA, where it nucleates assembly of the 50S subunit. This chain is Large ribosomal subunit protein uL3, found in Bacillus mycoides (strain KBAB4) (Bacillus weihenstephanensis).